The following is a 157-amino-acid chain: MTKTTRLTPGDKAPAFTLPDADGNNVSLADYRGRRVIVYFYPAASTPGCTKQACDFRDNLGDFTTAGLNVVGISPDKPEKLATFRDAQGLTFPLLSDPDREVLTAWGAYGEKQMYGKTVQGVIRSTFVVDEDGKIVVAQYNVKATGHVAKLRRDLSV.

The 151-residue stretch at 7–157 (LTPGDKAPAF…VAKLRRDLSV (151 aa)) folds into the Thioredoxin domain. The Cysteine sulfenic acid (-SOH) intermediate role is filled by Cys49. A disulfide bond links Cys49 and Cys54.

Belongs to the peroxiredoxin family. BCP/PrxQ subfamily. As to quaternary structure, monomer.

It catalyses the reaction a hydroperoxide + [thioredoxin]-dithiol = an alcohol + [thioredoxin]-disulfide + H2O. In terms of biological role, thiol-specific peroxidase that catalyzes the reduction of hydrogen peroxide and organic hydroperoxides to water and alcohols, respectively. Plays a role in cell protection against oxidative stress by detoxifying peroxides and as sensor of hydrogen peroxide-mediated signaling events. This Mycobacterium tuberculosis (strain CDC 1551 / Oshkosh) protein is Putative peroxiredoxin MT2597 (bcp).